Here is a 591-residue protein sequence, read N- to C-terminus: Probable translation initiation factor IF-2 (591 aa).

A tr-type G domain is found at 7–223 (LRTPIVCVMG…LLGLAQKFLE (217 aa)). The tract at residues 16–23 (GHVDHGKT) is G1. 16 to 23 (GHVDHGKT) serves as a coordination point for GTP. The G2 stretch occupies residues 41-45 (AITQH). Residues 78–81 (DTPG) form a G3 region. GTP-binding positions include 78–82 (DTPGH) and 132–135 (NKID). Residues 132-135 (NKID) form a G4 region. The segment at 200–202 (SAM) is G5.

The protein belongs to the TRAFAC class translation factor GTPase superfamily. Classic translation factor GTPase family. IF-2 subfamily.

In terms of biological role, function in general translation initiation by promoting the binding of the formylmethionine-tRNA to ribosomes. Seems to function along with eIF-2. The chain is Probable translation initiation factor IF-2 from Methanosarcina barkeri (strain Fusaro / DSM 804).